Reading from the N-terminus, the 61-residue chain is Large ribosomal subunit protein uL30 (61 aa).

This sequence belongs to the universal ribosomal protein uL30 family. In terms of assembly, part of the 50S ribosomal subunit.

This chain is Large ribosomal subunit protein uL30, found in Frankia casuarinae (strain DSM 45818 / CECT 9043 / HFP020203 / CcI3).